Here is a 1066-residue protein sequence, read N- to C-terminus: Protein sts5 (1066 aa).

A compositionally biased stretch (low complexity) spans 18–28; it reads QQDPSDAQSSP. Disordered stretches follow at residues 18–40, 154–178, and 247–286; these read QQDP…SLTT, ATST…SPNS, and SNFR…RKNL. The segment covering 29–40 has biased composition (polar residues); that stretch reads TFVPSANPSLTT. Phosphothreonine is present on Thr157. The segment covering 168-178 has biased composition (low complexity); that stretch reads HSVASVSSPNS. Thr262 bears the Phosphothreonine mark. Ser264 carries the post-translational modification Phosphoserine. Gly residues predominate over residues 270 to 280; the sequence is SGSGFSSGGSG. Thr377 is subject to Phosphothreonine. Positions 454–480 are disordered; sequence SSAANKERQTSSGNQGSSNNSGNDKPK. Low complexity predominate over residues 464–476; it reads SSGNQGSSNNSGN. Positions 482–556 constitute a CSD2 domain; the sequence is VWFKPSDKRV…AQVSALLHDT (75 aa). Positions 618-934 constitute an RNB domain; sequence NINSSSATDF…VHYQLQLLLR (317 aa). The region spanning 983–1033 is the DIS3L2 C-terminal domain; the sequence is QDGLVCFVAPSYFDVFFPSLGMEKRVHLDLLNLTHVRFEEDQGILSLYDES.

Belongs to the RNR ribonuclease family. As to quaternary structure, interacts with serine/threonine phosphatase ppe1, protein kinase C and an osmosensing MAP kinase.

Its subcellular location is the cytoplasm. Required for the maintenance of cell shape during interphase. Required for localization of cortical actin to the growing tips before mitosis. The sequence is that of Protein sts5 (sts5) from Schizosaccharomyces pombe (strain 972 / ATCC 24843) (Fission yeast).